Reading from the N-terminus, the 157-residue chain is Putative gamma-glutamylcyclotransferase CG2811 (157 aa).

Substrate is bound at residue 14–17; sequence YGTL. Residue E89 is the Proton acceptor of the active site.

Belongs to the gamma-glutamylcyclotransferase family.

In terms of biological role, putative gamma-glutamylcyclotransferase. This is Putative gamma-glutamylcyclotransferase CG2811 from Drosophila melanogaster (Fruit fly).